A 184-amino-acid polypeptide reads, in one-letter code: ATP synthase subunit delta (184 aa).

Belongs to the ATPase delta chain family. F-type ATPases have 2 components, F(1) - the catalytic core - and F(0) - the membrane proton channel. F(1) has five subunits: alpha(3), beta(3), gamma(1), delta(1), epsilon(1). F(0) has three main subunits: a(1), b(2) and c(10-14). The alpha and beta chains form an alternating ring which encloses part of the gamma chain. F(1) is attached to F(0) by a central stalk formed by the gamma and epsilon chains, while a peripheral stalk is formed by the delta and b chains.

It localises to the cell membrane. F(1)F(0) ATP synthase produces ATP from ADP in the presence of a proton or sodium gradient. F-type ATPases consist of two structural domains, F(1) containing the extramembraneous catalytic core and F(0) containing the membrane proton channel, linked together by a central stalk and a peripheral stalk. During catalysis, ATP synthesis in the catalytic domain of F(1) is coupled via a rotary mechanism of the central stalk subunits to proton translocation. Functionally, this protein is part of the stalk that links CF(0) to CF(1). It either transmits conformational changes from CF(0) to CF(1) or is implicated in proton conduction. The sequence is that of ATP synthase subunit delta from Rickettsia africae (strain ESF-5).